We begin with the raw amino-acid sequence, 349 residues long: Cytoplasmic tRNA 2-thiolation protein 2 (349 aa).

This sequence belongs to the CTU2/NCS2 family.

The protein localises to the cytoplasm. Its pathway is tRNA modification; 5-methoxycarbonylmethyl-2-thiouridine-tRNA biosynthesis. Functionally, plays a central role in 2-thiolation of mcm(5)S(2)U at tRNA wobble positions of tRNA(Lys), tRNA(Glu) and tRNA(Gln). May act by forming a heterodimer with tut-1/ctu-1 that ligates sulfur from thiocarboxylated urm-1 onto the uridine of tRNAs at wobble position. The sequence is that of Cytoplasmic tRNA 2-thiolation protein 2 from Caenorhabditis elegans.